A 210-amino-acid polypeptide reads, in one-letter code: Na(+)-translocating NADH-quinone reductase subunit D (210 aa).

6 helical membrane-spanning segments follow: residues 14 to 34 (PIIN…ALAV), 42 to 62 (LVMS…ISLI), 72 to 92 (IIVQ…VLQA), 96 to 116 (EIAK…IVMG), 131 to 151 (FMDG…VGFF), and 178 to 198 (NGLL…IWVI).

It belongs to the NqrDE/RnfAE family. As to quaternary structure, composed of six subunits; NqrA, NqrB, NqrC, NqrD, NqrE and NqrF.

Its subcellular location is the cell inner membrane. The catalysed reaction is a ubiquinone + n Na(+)(in) + NADH + H(+) = a ubiquinol + n Na(+)(out) + NAD(+). Its function is as follows. NQR complex catalyzes the reduction of ubiquinone-1 to ubiquinol by two successive reactions, coupled with the transport of Na(+) ions from the cytoplasm to the periplasm. NqrA to NqrE are probably involved in the second step, the conversion of ubisemiquinone to ubiquinol. This is Na(+)-translocating NADH-quinone reductase subunit D from Shewanella denitrificans (strain OS217 / ATCC BAA-1090 / DSM 15013).